A 386-amino-acid chain; its full sequence is Histidine decarboxylase (386 aa).

His120 serves as a coordination point for substrate. An N6-(pyridoxal phosphate)lysine modification is found at Lys233.

The protein belongs to the group II decarboxylase family. As to quaternary structure, homotetramer. It depends on pyridoxal 5'-phosphate as a cofactor.

The enzyme catalyses L-histidine + H(+) = histamine + CO2. The chain is Histidine decarboxylase from Vibrio campbellii (strain ATCC BAA-1116).